A 491-amino-acid polypeptide reads, in one-letter code: Aspartyl/glutamyl-tRNA(Asn/Gln) amidotransferase subunit B (491 aa).

Belongs to the GatB/GatE family. GatB subfamily. As to quaternary structure, heterotrimer of A, B and C subunits.

It catalyses the reaction L-glutamyl-tRNA(Gln) + L-glutamine + ATP + H2O = L-glutaminyl-tRNA(Gln) + L-glutamate + ADP + phosphate + H(+). It carries out the reaction L-aspartyl-tRNA(Asn) + L-glutamine + ATP + H2O = L-asparaginyl-tRNA(Asn) + L-glutamate + ADP + phosphate + 2 H(+). Allows the formation of correctly charged Asn-tRNA(Asn) or Gln-tRNA(Gln) through the transamidation of misacylated Asp-tRNA(Asn) or Glu-tRNA(Gln) in organisms which lack either or both of asparaginyl-tRNA or glutaminyl-tRNA synthetases. The reaction takes place in the presence of glutamine and ATP through an activated phospho-Asp-tRNA(Asn) or phospho-Glu-tRNA(Gln). The sequence is that of Aspartyl/glutamyl-tRNA(Asn/Gln) amidotransferase subunit B from Burkholderia multivorans (strain ATCC 17616 / 249).